Here is a 220-residue protein sequence, read N- to C-terminus: 7-cyano-7-deazaguanine synthase (220 aa).

10–20 (FSGGQDSTTCL) serves as a coordination point for ATP. 4 residues coordinate Zn(2+): Cys-186, Cys-195, Cys-198, and Cys-201.

The protein belongs to the QueC family. As to quaternary structure, homodimer. The cofactor is Zn(2+).

It catalyses the reaction 7-carboxy-7-deazaguanine + NH4(+) + ATP = 7-cyano-7-deazaguanine + ADP + phosphate + H2O + H(+). It participates in purine metabolism; 7-cyano-7-deazaguanine biosynthesis. Catalyzes the ATP-dependent conversion of 7-carboxy-7-deazaguanine (CDG) to 7-cyano-7-deazaguanine (preQ(0)). The polypeptide is 7-cyano-7-deazaguanine synthase (Bacillus cereus (strain G9842)).